The primary structure comprises 556 residues: Formate--tetrahydrofolate ligase (556 aa).

64 to 71 (TPAGEGKT) provides a ligand contact to ATP.

The protein belongs to the formate--tetrahydrofolate ligase family.

The enzyme catalyses (6S)-5,6,7,8-tetrahydrofolate + formate + ATP = (6R)-10-formyltetrahydrofolate + ADP + phosphate. The protein operates within one-carbon metabolism; tetrahydrofolate interconversion. In Haemophilus ducreyi (strain 35000HP / ATCC 700724), this protein is Formate--tetrahydrofolate ligase.